The primary structure comprises 103 residues: MVKVIDIGRVVVKVLGREAGRKAVVVDIVDENYVVITGPKQLTGVRRRRVNINHIEPTDKKIDIKRGASDEEVLKAVEAAGLVEYMREKVKPKFFGITSAEVK.

It belongs to the eukaryotic ribosomal protein eL14 family.

The sequence is that of Large ribosomal subunit protein eL14 from Pyrobaculum islandicum (strain DSM 4184 / JCM 9189 / GEO3).